We begin with the raw amino-acid sequence, 242 residues long: Ubiquinone biosynthesis O-methyltransferase (242 aa).

S-adenosyl-L-methionine is bound by residues R44, G64, D85, and M129.

It belongs to the methyltransferase superfamily. UbiG/COQ3 family.

The catalysed reaction is a 3-demethylubiquinol + S-adenosyl-L-methionine = a ubiquinol + S-adenosyl-L-homocysteine + H(+). It catalyses the reaction a 3-(all-trans-polyprenyl)benzene-1,2-diol + S-adenosyl-L-methionine = a 2-methoxy-6-(all-trans-polyprenyl)phenol + S-adenosyl-L-homocysteine + H(+). The protein operates within cofactor biosynthesis; ubiquinone biosynthesis. Its function is as follows. O-methyltransferase that catalyzes the 2 O-methylation steps in the ubiquinone biosynthetic pathway. The protein is Ubiquinone biosynthesis O-methyltransferase of Salmonella agona (strain SL483).